Consider the following 242-residue polypeptide: Uridylate kinase (242 aa).

Lys15–Gly18 provides a ligand contact to ATP. Gly57 is a binding site for UMP. Residues Gly58 and Arg62 each coordinate ATP. Residues Asp78 and Thr139–Thr146 contribute to the UMP site. ATP-binding residues include Thr166, Tyr172, and Asp175.

This sequence belongs to the UMP kinase family. In terms of assembly, homohexamer.

The protein resides in the cytoplasm. The catalysed reaction is UMP + ATP = UDP + ADP. It participates in pyrimidine metabolism; CTP biosynthesis via de novo pathway; UDP from UMP (UMPK route): step 1/1. Its activity is regulated as follows. Inhibited by UTP. Functionally, catalyzes the reversible phosphorylation of UMP to UDP. This Acinetobacter baylyi (strain ATCC 33305 / BD413 / ADP1) protein is Uridylate kinase.